Reading from the N-terminus, the 283-residue chain is Nucleoid occlusion protein (283 aa).

A disordered region spans residues Met1 to Ala21. Positions Glu148–Leu167 form a DNA-binding region, H-T-H motif.

Belongs to the ParB family.

It localises to the cytoplasm. The protein localises to the nucleoid. Functionally, effects nucleoid occlusion by binding relatively nonspecifically to DNA and preventing the assembly of the division machinery in the vicinity of the nucleoid, especially under conditions that disturb the cell cycle. It helps to coordinate cell division and chromosome segregation by preventing the formation of the Z ring through the nucleoid, which would cause chromosome breakage. The protein is Nucleoid occlusion protein of Bacillus velezensis (strain DSM 23117 / BGSC 10A6 / LMG 26770 / FZB42) (Bacillus amyloliquefaciens subsp. plantarum).